The chain runs to 423 residues: E3 ubiquitin-protein ligase makorin-2 (423 aa).

2 consecutive C3H1-type zinc fingers follow at residues 2–29 (STKQ…HDLN) and 31–58 (SKPS…HIKP). The disordered stretch occupies residues 59–90 (SSRGGGGGAPEDQAGGGGAGGGGAGIGGAGGG). Residues 61–90 (RGGGGGAPEDQAGGGGAGGGGAGIGGAGGG) show a composition bias toward gly residues. The C3H1-type 3 zinc-finger motif lies at 162-189 (QNLPQLCPYAANGHCFYEENCTYLHGDL). Positions 190–219 (CEVCGLQVLHPHDSEQRRAHEKMCLAAFEA) are makorin-type Cys-His. The RING-type zinc finger occupies 235-289 (CSICMEVVVQKANPSDRRFGILSSCCHTFCLACIRKWRCTRTFSNTIIKSCPECR). Residues 318-347 (GVSKKACKYFDQGRGSCPFGGKCLYLHAFP) form a C3H1-type 4 zinc finger.

Its subcellular location is the cytoplasm. The protein localises to the nucleus. It carries out the reaction S-ubiquitinyl-[E2 ubiquitin-conjugating enzyme]-L-cysteine + [acceptor protein]-L-lysine = [E2 ubiquitin-conjugating enzyme]-L-cysteine + N(6)-ubiquitinyl-[acceptor protein]-L-lysine.. It functions in the pathway protein modification; protein ubiquitination. E3 ubiquitin ligase catalyzing the covalent attachment of ubiquitin moieties onto substrate proteins. Inhibits neurogenesis and axis formation during embryonic development by modulating the phosphatidylinositol 3-kinase (PI3K) pathway. Acts downstream of PI3K and akt1 to up-regulate gsk3b mRNA expression. The protein is E3 ubiquitin-protein ligase makorin-2 (mkrn2) of Seriola quinqueradiata (Five-ray yellowtail).